The chain runs to 208 residues: Protein-L-isoaspartate O-methyltransferase (208 aa).

The active site involves Ser-59.

The protein belongs to the methyltransferase superfamily. L-isoaspartyl/D-aspartyl protein methyltransferase family.

The protein resides in the cytoplasm. It carries out the reaction [protein]-L-isoaspartate + S-adenosyl-L-methionine = [protein]-L-isoaspartate alpha-methyl ester + S-adenosyl-L-homocysteine. In terms of biological role, catalyzes the methyl esterification of L-isoaspartyl residues in peptides and proteins that result from spontaneous decomposition of normal L-aspartyl and L-asparaginyl residues. It plays a role in the repair and/or degradation of damaged proteins. The sequence is that of Protein-L-isoaspartate O-methyltransferase from Pectobacterium atrosepticum (strain SCRI 1043 / ATCC BAA-672) (Erwinia carotovora subsp. atroseptica).